A 737-amino-acid polypeptide reads, in one-letter code: uncharacterized protein (737 aa).

The next 7 helical transmembrane spans lie at 11–31 (LSLL…LRPL), 36–56 (ETKH…LTFF), 60–80 (WFVT…ILFY), 118–138 (TLLF…WVIY), 142–162 (ILFF…FTPY), 164–184 (ATFA…LLYL), and 200–220 (VLKW…FGLA). Residues 556–611 (PAQFTSSDTKDSGSDSSSSPKKAKEKQKEEKKQPQKEEKQKEKREPAVSKKPSASH) are disordered. Over residues 581 to 603 (KQKEEKKQPQKEEKQKEKREPAV) the composition is skewed to basic and acidic residues. Residues 618 to 638 (LYAALAVLAVLLVAAVLLYVF) form a helical membrane-spanning segment.

Its subcellular location is the cell membrane. This is an uncharacterized protein from Bacillus subtilis (strain 168).